The sequence spans 106 residues: VYEQVSIEVPQSVEAPVVIITGASEIEASTIQALSFGPDVXKEADVEAMIKAVDAWGQVDVLINNAGITRAGVIGLQKNINVNAIAPGFIASDMTAKILETIPLGR.

It belongs to the short-chain dehydrogenases/reductases (SDR) family. Homotetramer. In terms of tissue distribution, mesocarp.

It is found in the plastid. The protein resides in the chloroplast. The catalysed reaction is a (3R)-hydroxyacyl-[ACP] + NADP(+) = a 3-oxoacyl-[ACP] + NADPH + H(+). The protein operates within lipid metabolism; fatty acid biosynthesis. In Persea americana (Avocado), this protein is 3-oxoacyl-[acyl-carrier-protein] reductase.